Here is a 172-residue protein sequence, read N- to C-terminus: DNA-directed RNA polymerase II subunit RPB7 (172 aa).

It belongs to the eukaryotic RPB7/RPC8 RNA polymerase subunit family. As to quaternary structure, component of the RNA polymerase II (Pol II) complex consisting of 12 subunits. RPB4 and RPB7 form a subcomplex that protrudes from the 10-subunit Pol II core complex.

It localises to the nucleus. Its function is as follows. DNA-dependent RNA polymerase catalyzes the transcription of DNA into RNA using the four ribonucleoside triphosphates as substrates. Component of RNA polymerase II which synthesizes mRNA precursors and many functional non-coding RNAs. Pol II is the central component of the basal RNA polymerase II transcription machinery. It is composed of mobile elements that move relative to each other. RPB7 is part of a subcomplex with RPB4 that binds to a pocket formed by RPB1, RPB2 and RPB6 at the base of the clamp element. The RPB4-RPB7 subcomplex seems to lock the clamp via RPB7 in the closed conformation thus preventing double-stranded DNA to enter the active site cleft. The RPB4-RPB7 subcomplex binds single-stranded DNA and RNA. The polypeptide is DNA-directed RNA polymerase II subunit RPB7 (polr2g) (Danio rerio (Zebrafish)).